The sequence spans 507 residues: Glucose-6-phosphate isomerase (507 aa).

Glu-337 functions as the Proton donor in the catalytic mechanism. Active-site residues include His-368 and Lys-478.

It belongs to the GPI family.

The protein resides in the cytoplasm. The catalysed reaction is alpha-D-glucose 6-phosphate = beta-D-fructose 6-phosphate. It participates in carbohydrate biosynthesis; gluconeogenesis. The protein operates within carbohydrate degradation; glycolysis; D-glyceraldehyde 3-phosphate and glycerone phosphate from D-glucose: step 2/4. Functionally, catalyzes the reversible isomerization of glucose-6-phosphate to fructose-6-phosphate. The sequence is that of Glucose-6-phosphate isomerase from Novosphingobium aromaticivorans (strain ATCC 700278 / DSM 12444 / CCUG 56034 / CIP 105152 / NBRC 16084 / F199).